The sequence spans 140 residues: Large ribosomal subunit protein uL11 (140 aa).

It belongs to the universal ribosomal protein uL11 family. In terms of assembly, part of the ribosomal stalk of the 50S ribosomal subunit. Interacts with L10 and the large rRNA to form the base of the stalk. L10 forms an elongated spine to which L12 dimers bind in a sequential fashion forming a multimeric L10(L12)X complex. In terms of processing, one or more lysine residues are methylated.

Forms part of the ribosomal stalk which helps the ribosome interact with GTP-bound translation factors. The sequence is that of Large ribosomal subunit protein uL11 from Staphylococcus carnosus (strain TM300).